Reading from the N-terminus, the 343-residue chain is ATP-dependent 6-phosphofructokinase (343 aa).

ATP contacts are provided by residues G10 and 103–106 (GEGT). E104 contacts Mg(2+). Substrate-binding positions include 126-128 (TID), R163, 170-172 (MGR), E223, R267, and 273-276 (HVQR). The Proton acceptor role is filled by D128.

Belongs to the phosphofructokinase type A (PFKA) family. Mixed-substrate PFK group III subfamily. Homodimer or homotetramer. It depends on Mg(2+) as a cofactor.

The protein resides in the cytoplasm. It carries out the reaction beta-D-fructose 6-phosphate + ATP = beta-D-fructose 1,6-bisphosphate + ADP + H(+). The protein operates within carbohydrate degradation; glycolysis; D-glyceraldehyde 3-phosphate and glycerone phosphate from D-glucose: step 3/4. Functionally, catalyzes the phosphorylation of D-fructose 6-phosphate to fructose 1,6-bisphosphate by ATP, the first committing step of glycolysis. The protein is ATP-dependent 6-phosphofructokinase of Mycobacterium leprae (strain TN).